Here is a 384-residue protein sequence, read N- to C-terminus: Tryptophan--tRNA ligase (384 aa).

Positions 81–89 match the 'HIGH' region motif; sequence PSGPMHIGH. Residues 252–256 carry the 'KMSKS' region motif; sequence KMSAS.

Belongs to the class-I aminoacyl-tRNA synthetase family.

The protein resides in the cytoplasm. It carries out the reaction tRNA(Trp) + L-tryptophan + ATP = L-tryptophyl-tRNA(Trp) + AMP + diphosphate + H(+). The protein is Tryptophan--tRNA ligase of Thermococcus kodakarensis (strain ATCC BAA-918 / JCM 12380 / KOD1) (Pyrococcus kodakaraensis (strain KOD1)).